The sequence spans 346 residues: DNA-directed RNA polymerase subunit alpha (346 aa).

The interval 1–233 (MLRDEVAVSA…DLFIPFLHAE (233 aa)) is alpha N-terminal domain (alpha-NTD). The tract at residues 268–346 (IELKCIFIDQ…NKFLIGNPSE (79 aa)) is alpha C-terminal domain (alpha-CTD).

Belongs to the RNA polymerase alpha chain family. In plastids the minimal PEP RNA polymerase catalytic core is composed of four subunits: alpha, beta, beta', and beta''. When a (nuclear-encoded) sigma factor is associated with the core the holoenzyme is formed, which can initiate transcription.

The protein resides in the plastid. Its subcellular location is the chloroplast. It carries out the reaction RNA(n) + a ribonucleoside 5'-triphosphate = RNA(n+1) + diphosphate. DNA-dependent RNA polymerase catalyzes the transcription of DNA into RNA using the four ribonucleoside triphosphates as substrates. This Ranunculus macranthus (Large buttercup) protein is DNA-directed RNA polymerase subunit alpha.